The following is a 593-amino-acid chain: Metal-response element-binding transcription factor 2 (593 aa).

The disordered stretch occupies residues 1-24 (MRDSTGAGNSLVHKRSPLRRNQKT). Residues 12–22 (VHKRSPLRRNQ) show a composition bias toward basic residues. Phosphothreonine is present on Thr24. The region spanning 44–101 (CKFEEGQDVLARWSDGLFYLGTIKKINILKQSCFIIFEDSSKSWVLWKDIQTGATGSG) is the Tudor domain. 2 PHD-type zinc fingers span residues 102-157 (EMVC…CVFA) and 201-255 (QCYC…CSSG). Disordered regions lie at residues 357 to 410 (VAFK…GPYT) and 444 to 486 (GIAH…TRTG). Residue Lys360 forms a Glycyl lysine isopeptide (Lys-Gly) (interchain with G-Cter in SUMO2) linkage. Residues 360–374 (KAEKEPEGTSHEFKI) are compositionally biased toward basic and acidic residues. Residues 447 to 470 (HSSNTSDVDLTGASSANETTSASI) show a composition bias toward polar residues. Ser452 carries the phosphoserine modification. A Glycyl lysine isopeptide (Lys-Gly) (interchain with G-Cter in SUMO2) cross-link involves residue Lys522.

Belongs to the Polycomblike family. As to quaternary structure, associates with the PRC2 complex, which consists of the core components EED, EZH1 or EZH2, SUZ12, and RBBP4, and various combinations of accessory subunits including AEBP2, JARID2, PHF19, MTF2 and EPOP. Forms a dimeric PRC2.1 (class 1, PRC-PCL) complex consisting of at least SUZ12, RBBP4, and PHF19 or MTF2; PHF19 and MTF2 stabilize the dimeric structure which enhances PRC2 interaction with chromatin.

The protein resides in the nucleus. In terms of biological role, polycomb group (PcG) protein that specifically binds histone H3 trimethylated at 'Lys-36' (H3K36me3) and recruits the PRC2 complex, thus enhancing PRC2 H3K27me3 methylation activity. Regulates the transcriptional networks during embryonic stem cell self-renewal and differentiation. Promotes recruitment of the PRC2 complex to the inactive X chromosome in differentiating XX ES cells and PRC2 recruitment to target genes in undifferentiated ES cells. Required to repress Hox genes by enhancing H3K27me3 methylation of the PRC2 complex. In some conditions may act as an inhibitor of PRC2 activity: able to activate the CDKN2A gene and promote cellular senescence by suppressing the catalytic activity of the PRC2 complex locally. Binds to the metal-regulating-element (MRE) of MT1A gene promoter. The sequence is that of Metal-response element-binding transcription factor 2 (Mtf2) from Mus musculus (Mouse).